The sequence spans 23 residues: Thylakoid lumenal 17.4 kDa protein (23 aa).

A disordered region spans residues 1-23 (ANQRLPPLSNDPDRCERAFVGNT).

The protein resides in the plastid. It localises to the chloroplast thylakoid lumen. This is Thylakoid lumenal 17.4 kDa protein from Spinacia oleracea (Spinach).